Consider the following 196-residue polypeptide: MSNQIKLLVGLANPGLEYKRTRHNAGAWVVEELARVHNVSMREESKFFGLTGRIQSNGDDLRLLIPTTFMNLSGKGIAAMAKFYQIKPEEILVAHDELDLPPGVAKFKKGGGHGGHNGLRDTISKLANTKEFYRLRIGIGHPGHKDKVAGFVLGKAPTKEQELIDAAVDESTRCLDILLKDGLSKAQNRLHTFKAE.

Tyrosine 18 provides a ligand contact to tRNA. Histidine 23 acts as the Proton acceptor in catalysis. Residues phenylalanine 69, asparagine 71, and asparagine 117 each contribute to the tRNA site.

Belongs to the PTH family. As to quaternary structure, monomer.

The protein resides in the cytoplasm. It catalyses the reaction an N-acyl-L-alpha-aminoacyl-tRNA + H2O = an N-acyl-L-amino acid + a tRNA + H(+). Its function is as follows. Hydrolyzes ribosome-free peptidyl-tRNAs (with 1 or more amino acids incorporated), which drop off the ribosome during protein synthesis, or as a result of ribosome stalling. In terms of biological role, catalyzes the release of premature peptidyl moieties from peptidyl-tRNA molecules trapped in stalled 50S ribosomal subunits, and thus maintains levels of free tRNAs and 50S ribosomes. This is Peptidyl-tRNA hydrolase from Aliivibrio fischeri (strain MJ11) (Vibrio fischeri).